The following is a 182-amino-acid chain: Ribosome maturation factor RimM (182 aa).

The region spanning 103-182 (EDEFYWRELF…RIEVDWDPGF (80 aa)) is the PRC barrel domain.

It belongs to the RimM family. Binds ribosomal protein uS19.

It is found in the cytoplasm. Its function is as follows. An accessory protein needed during the final step in the assembly of 30S ribosomal subunit, possibly for assembly of the head region. Essential for efficient processing of 16S rRNA. May be needed both before and after RbfA during the maturation of 16S rRNA. It has affinity for free ribosomal 30S subunits but not for 70S ribosomes. The chain is Ribosome maturation factor RimM from Vibrio campbellii (strain ATCC BAA-1116).